The sequence spans 172 residues: Large ribosomal subunit protein uL10 (172 aa).

Belongs to the universal ribosomal protein uL10 family. In terms of assembly, part of the ribosomal stalk of the 50S ribosomal subunit. The N-terminus interacts with L11 and the large rRNA to form the base of the stalk. The C-terminus forms an elongated spine to which L12 dimers bind in a sequential fashion forming a multimeric L10(L12)X complex.

Forms part of the ribosomal stalk, playing a central role in the interaction of the ribosome with GTP-bound translation factors. This Rhodospirillum rubrum (strain ATCC 11170 / ATH 1.1.1 / DSM 467 / LMG 4362 / NCIMB 8255 / S1) protein is Large ribosomal subunit protein uL10.